The primary structure comprises 393 residues: Serpin-Z4 (393 aa).

The tract at residues 342 to 366 is RCL; it reads GTEAAAVSVASMTKDMLLMGDFVAD.

Belongs to the serpin family.

Functionally, probable serine protease inhibitor. The chain is Serpin-Z4 from Arabidopsis thaliana (Mouse-ear cress).